The sequence spans 465 residues: Light-independent protochlorophyllide reductase subunit N (465 aa).

Cys-23, Cys-48, and Cys-108 together coordinate [4Fe-4S] cluster.

Belongs to the BchN/ChlN family. As to quaternary structure, protochlorophyllide reductase is composed of three subunits; ChlL, ChlN and ChlB. Forms a heterotetramer of two ChlB and two ChlN subunits. The cofactor is [4Fe-4S] cluster.

The enzyme catalyses chlorophyllide a + oxidized 2[4Fe-4S]-[ferredoxin] + 2 ADP + 2 phosphate = protochlorophyllide a + reduced 2[4Fe-4S]-[ferredoxin] + 2 ATP + 2 H2O. Its pathway is porphyrin-containing compound metabolism; chlorophyll biosynthesis (light-independent). Functionally, component of the dark-operative protochlorophyllide reductase (DPOR) that uses Mg-ATP and reduced ferredoxin to reduce ring D of protochlorophyllide (Pchlide) to form chlorophyllide a (Chlide). This reaction is light-independent. The NB-protein (ChlN-ChlB) is the catalytic component of the complex. The polypeptide is Light-independent protochlorophyllide reductase subunit N (Trichodesmium erythraeum (strain IMS101)).